Here is a 397-residue protein sequence, read N- to C-terminus: Tryptophan synthase beta chain (397 aa).

An N6-(pyridoxal phosphate)lysine modification is found at lysine 87.

This sequence belongs to the TrpB family. Tetramer of two alpha and two beta chains. It depends on pyridoxal 5'-phosphate as a cofactor.

The enzyme catalyses (1S,2R)-1-C-(indol-3-yl)glycerol 3-phosphate + L-serine = D-glyceraldehyde 3-phosphate + L-tryptophan + H2O. It functions in the pathway amino-acid biosynthesis; L-tryptophan biosynthesis; L-tryptophan from chorismate: step 5/5. The beta subunit is responsible for the synthesis of L-tryptophan from indole and L-serine. The polypeptide is Tryptophan synthase beta chain (Salmonella choleraesuis (strain SC-B67)).